We begin with the raw amino-acid sequence, 245 residues long: Ribonuclease PH (245 aa).

Phosphate-binding positions include R93 and 131–133 (GTR).

Belongs to the RNase PH family. Homohexameric ring arranged as a trimer of dimers.

It carries out the reaction tRNA(n+1) + phosphate = tRNA(n) + a ribonucleoside 5'-diphosphate. Its function is as follows. Phosphorolytic 3'-5' exoribonuclease that plays an important role in tRNA 3'-end maturation. Removes nucleotide residues following the 3'-CCA terminus of tRNAs; can also add nucleotides to the ends of RNA molecules by using nucleoside diphosphates as substrates, but this may not be physiologically important. Probably plays a role in initiation of 16S rRNA degradation (leading to ribosome degradation) during starvation. In Corynebacterium glutamicum (strain ATCC 13032 / DSM 20300 / JCM 1318 / BCRC 11384 / CCUG 27702 / LMG 3730 / NBRC 12168 / NCIMB 10025 / NRRL B-2784 / 534), this protein is Ribonuclease PH.